Here is a 77-residue protein sequence, read N- to C-terminus: MKAFIVILSIAIVLLLIVSIKETSAKDCKQECVKRYTNGDFTNFFKVEYGPERRGGKCYCEFTCRVKFYIHLKHEMN.

Residues Met-1–Ala-25 form the signal peptide. Residues Lys-26–Lys-46 constitute a propeptide that is removed on maturation.

It belongs to the scolopendra neurotoxin 3 family. Post-translationally, contains 2 disulfide bonds. As to expression, expressed by the venom gland.

Its subcellular location is the secreted. This is Putative neurotoxin 2 from Scolopendra mutilans (Chinese red-headed centipede).